The chain runs to 78 residues: Large ribosomal subunit protein bL28 (78 aa).

The protein belongs to the bacterial ribosomal protein bL28 family.

This Prochlorococcus marinus (strain AS9601) protein is Large ribosomal subunit protein bL28.